Consider the following 205-residue polypeptide: UPF0301 protein Bind_0718 (205 aa).

This sequence belongs to the UPF0301 (AlgH) family.

This is UPF0301 protein Bind_0718 from Beijerinckia indica subsp. indica (strain ATCC 9039 / DSM 1715 / NCIMB 8712).